Here is a 313-residue protein sequence, read N- to C-terminus: Probable 5-dehydro-4-deoxyglucarate dehydratase 1 (313 aa).

This sequence belongs to the DapA family.

It catalyses the reaction 5-dehydro-4-deoxy-D-glucarate + H(+) = 2,5-dioxopentanoate + CO2 + H2O. It functions in the pathway carbohydrate acid metabolism; D-glucarate degradation; 2,5-dioxopentanoate from D-glucarate: step 2/2. In Streptomyces avermitilis (strain ATCC 31267 / DSM 46492 / JCM 5070 / NBRC 14893 / NCIMB 12804 / NRRL 8165 / MA-4680), this protein is Probable 5-dehydro-4-deoxyglucarate dehydratase 1.